The chain runs to 244 residues: Lipid A 1-phosphatase (244 aa).

A run of 6 helical transmembrane segments spans residues 28–48, 60–80, 98–118, 154–174, 178–198, and 201–221; these read LFVT…PIGA, ELLT…LLFF, ALYV…SGLL, FPSG…LLFP, VAFI…GAHY, and DVIA…IVFA.

Belongs to the lipid A LpxE 1-phosphatase family.

It localises to the cell inner membrane. The protein operates within bacterial outer membrane biogenesis; LPS lipid A biosynthesis. Removes the 1-phosphate group from (tetraacyl) lipid A species, has no requirement for the Kdo(2) moiety of lipid A. Has no 4'-phosphatase activity. Reduces sensitivity of S.meliloti strain 1021 to the cationic antimicrobial peptide (CAMP) polymyxin B. The protein is Lipid A 1-phosphatase of Rhizobium johnstonii (strain DSM 114642 / LMG 32736 / 3841) (Rhizobium leguminosarum bv. viciae).